A 513-amino-acid polypeptide reads, in one-letter code: Xylose import ATP-binding protein XylG (513 aa).

ABC transporter domains are found at residues 5 to 242 (LEMK…VGRE) and 259 to 505 (LRVE…LRSE). 37-44 (GENGSGKS) is an ATP binding site.

The protein belongs to the ABC transporter superfamily. Xylose importer (TC 3.A.1.2.4) family. In terms of assembly, the complex is composed of two ATP-binding proteins (XylG), two transmembrane proteins (XylH) and a solute-binding protein (XylF).

The protein resides in the cell inner membrane. It catalyses the reaction D-xylose(out) + ATP + H2O = D-xylose(in) + ADP + phosphate + H(+). Functionally, part of the ABC transporter complex XylFGH involved in xylose import. Responsible for energy coupling to the transport system. This Pectobacterium atrosepticum (strain SCRI 1043 / ATCC BAA-672) (Erwinia carotovora subsp. atroseptica) protein is Xylose import ATP-binding protein XylG.